Reading from the N-terminus, the 457-residue chain is Acetate--CoA ligase [ADP-forming] II subunit alpha (457 aa).

Belongs to the acetate CoA ligase alpha subunit family. Heterotetramer of two alpha and two beta subunits.

It catalyses the reaction acetate + ATP + CoA = acetyl-CoA + ADP + phosphate. Catalyzes the reversible formation of acetate and ATP from acetyl-CoA by using ADP and phosphate. Can use other substrates such as phenylacetyl-CoA, indoleacetyl-CoA and isobutyryl-CoA, but not succinyl-CoA. Seems to be involved primarily in the degradation of aryl-CoA esters to the corresponding acids. Participates in the conversion of acetyl-CoA to acetate and in the degradation of branched-chain amino acids via branched-chain-acyl-CoA esters. This Pyrococcus furiosus (strain ATCC 43587 / DSM 3638 / JCM 8422 / Vc1) protein is Acetate--CoA ligase [ADP-forming] II subunit alpha.